The sequence spans 426 residues: Na(+)/H(+) antiporter 1 (426 aa).

The next 12 helical transmembrane spans lie at 1-21 (MELM…SLVA), 29-49 (IPDI…LQII), 57-77 (IFEY…AFTM), 95-115 (ITFL…LNLP), 120-140 (VGYL…IPVF), 158-178 (IFND…FGLF), 184-204 (LIDL…LAKI), 208-228 (IIIH…GAML), 236-256 (LLPS…IMGL), 286-306 (VFIF…NYFI), 309-329 (LLVA…LGLI), and 382-402 (IAGT…ILEA).

It belongs to the monovalent cation:proton antiporter 1 (CPA1) transporter (TC 2.A.36) family.

It is found in the cell membrane. This is a Na(+)/H(+) antiporter. Can also transport lithium. The chain is Na(+)/H(+) antiporter 1 from Methanocaldococcus jannaschii (strain ATCC 43067 / DSM 2661 / JAL-1 / JCM 10045 / NBRC 100440) (Methanococcus jannaschii).